Here is a 629-residue protein sequence, read N- to C-terminus: Plastin-1 (629 aa).

Residue M1 is modified to N-acetylmethionine. EF-hand domains follow at residues 11–46 (EELE…ASLP) and 51–86 (KVRE…LKSK). Positions 24, 26, 28, 30, 35, 64, 66, 68, 70, and 75 each coordinate Ca(2+). Actin-binding regions lie at residues 108-380 (TSTI…CLHK) and 381-625 (PNNN…GKGL). Calponin-homology (CH) domains follow at residues 122–238 (EEEK…KVGL), 266–376 (LSPE…NTYP), 395–504 (SKEE…RRYT), and 516–625 (KVND…GKGL).

As to quaternary structure, monomer. Post-translationally, phosphorylated. In terms of tissue distribution, in small intestine, colon, and kidney; relatively lower levels of expression are detected in the lung and stomach.

It is found in the cytoplasm. Its subcellular location is the cell projection. It localises to the stereocilium. Functionally, actin-bundling protein. In the inner ear, it is required for stereocilia formation. Mediates liquid packing of actin filaments that is necessary for stereocilia to grow to their proper dimensions. The sequence is that of Plastin-1 (PLS1) from Homo sapiens (Human).